The following is a 629-amino-acid chain: DNA mismatch repair protein MutL (629 aa).

The protein belongs to the DNA mismatch repair MutL/HexB family.

This protein is involved in the repair of mismatches in DNA. It is required for dam-dependent methyl-directed DNA mismatch repair. May act as a 'molecular matchmaker', a protein that promotes the formation of a stable complex between two or more DNA-binding proteins in an ATP-dependent manner without itself being part of a final effector complex. The chain is DNA mismatch repair protein MutL from Haemophilus influenzae (strain PittGG).